The chain runs to 387 residues: tRNA N6-adenosine threonylcarbamoyltransferase (387 aa).

Residues His-112 and His-116 each contribute to the Fe cation site. Substrate is bound by residues 134–138 (LASGG), Asp-167, Gly-180, and Asn-325. Position 353 (Asp-353) interacts with Fe cation.

Belongs to the KAE1 / TsaD family. Fe(2+) is required as a cofactor.

It localises to the cytoplasm. It carries out the reaction L-threonylcarbamoyladenylate + adenosine(37) in tRNA = N(6)-L-threonylcarbamoyladenosine(37) in tRNA + AMP + H(+). Required for the formation of a threonylcarbamoyl group on adenosine at position 37 (t(6)A37) in tRNAs that read codons beginning with adenine. Is involved in the transfer of the threonylcarbamoyl moiety of threonylcarbamoyl-AMP (TC-AMP) to the N6 group of A37, together with TsaE and TsaB. TsaD likely plays a direct catalytic role in this reaction. This chain is tRNA N6-adenosine threonylcarbamoyltransferase, found in Rickettsia typhi (strain ATCC VR-144 / Wilmington).